Here is a 617-residue protein sequence, read N- to C-terminus: Pentatricopeptide repeat-containing protein At4g18520, chloroplastic (617 aa).

The N-terminal 19 residues, 1–19, are a transit peptide targeting the chloroplast; sequence MFSLSLIQPRLRISEIPVT. PPR repeat units follow at residues 116-146, 147-181, 183-217, 222-247, 248-282, 283-317, 318-348, 349-383, 384-418, 419-449, 450-484, 485-519, 520-550, and 551-585; these read VIYF…MPEK, NTVT…GIRF, NERM…GVGN, SSLV…MEEK, DVIS…WFLP, NEFT…MIKT, DVFV…MSNR, NTVT…HLIA, NNLT…SIEK, NVYI…LPSR, DVVS…GVEP, NPFT…HALS, NVFV…MPEK, and NLVS…GFEV.

It belongs to the PPR family. PCMP-A subfamily. As to quaternary structure, interacts with MORF8/RIP1, MORF2/RIP2 and MORF9/RIP9. As to expression, expressed specifically in aerial greening tissues, such as cotyledons, rosette leaves, cauline leaves, stems, sepals, stamens, carpels and siliques.

The protein resides in the plastid. Its subcellular location is the chloroplast. Its function is as follows. Required for proper chloroplast development. Involved in the regulation of plastid gene expression probably through regulation of plastid-encoded polymerase (PEP) dependent chloroplast transcription. Required for RNA editing of several chloroplastic transcripts, especially accD transcripts. Required for processing of the chloroplastic rpoA pre-mRNA. Required for the monocistronic rpoA transcript processing from the rpl23-rpl2-rps19-rpl22-rps3-rpl16-rpl14-rps8-rpl36-rps11-rpoA polycistron. Binds the intergenic sequence of rps11-rpoA for rpoA monocistronic RNA cleavage. The chain is Pentatricopeptide repeat-containing protein At4g18520, chloroplastic (PCMP-A2) from Arabidopsis thaliana (Mouse-ear cress).